Consider the following 442-residue polypeptide: Histidinol dehydrogenase (442 aa).

Residues Tyr142, Gln204, and Asn227 each contribute to the NAD(+) site. Substrate is bound by residues Ser250, Gln272, and His275. Zn(2+)-binding residues include Gln272 and His275. Active-site proton acceptor residues include Glu340 and His341. Residues His341, Asp374, Glu428, and His433 each contribute to the substrate site. Zn(2+) is bound at residue Asp374. His433 serves as a coordination point for Zn(2+).

The protein belongs to the histidinol dehydrogenase family. Zn(2+) serves as cofactor.

The catalysed reaction is L-histidinol + 2 NAD(+) + H2O = L-histidine + 2 NADH + 3 H(+). It functions in the pathway amino-acid biosynthesis; L-histidine biosynthesis; L-histidine from 5-phospho-alpha-D-ribose 1-diphosphate: step 9/9. In terms of biological role, catalyzes the sequential NAD-dependent oxidations of L-histidinol to L-histidinaldehyde and then to L-histidine. The chain is Histidinol dehydrogenase from Prochlorococcus marinus (strain MIT 9313).